The sequence spans 111 residues: Large ribosomal subunit protein P1 (111 aa).

The tract at residues 75 to 111 (AAAPAAEEKAEEEKKEEEEEKKEEEVDLSGLSGMFGF) is disordered. A compositionally biased stretch (acidic residues) spans 88–101 (KKEEEEEKKEEEVD).

This sequence belongs to the eukaryotic ribosomal protein P1/P2 family. As to quaternary structure, part of the 50S ribosomal subunit. Homodimer, it forms part of the ribosomal stalk which helps the ribosome interact with GTP-bound translation factors. Forms a heptameric uL10/P0(P1)2(P1)2(P1)2 complex, where uL10/P0 forms an elongated spine to which the P1 dimers bind in a sequential fashion.

In terms of biological role, forms part of the ribosomal stalk, playing a central role in the interaction of the ribosome with GTP-bound translation factors. The sequence is that of Large ribosomal subunit protein P1 from Aeropyrum pernix (strain ATCC 700893 / DSM 11879 / JCM 9820 / NBRC 100138 / K1).